Consider the following 184-residue polypeptide: Probable DNA-directed RNA polymerase subunit delta (184 aa).

The 69-residue stretch at 14-82 folds into the HTH HARE-type domain; it reads KSFIDMAHTL…GENNWGLRDW (69 aa). Residues 114-184 form a disordered region; it reads LLGEEEEEID…FNDDPDDDKI (71 aa). Over residues 117–184 the composition is skewed to acidic residues; it reads EEEEEIDDQE…FNDDPDDDKI (68 aa).

This sequence belongs to the RpoE family. In terms of assembly, RNAP is composed of a core of 2 alpha, a beta and a beta' subunits. The core is associated with a delta subunit and one of several sigma factors.

Functionally, participates in both the initiation and recycling phases of transcription. In the presence of the delta subunit, RNAP displays an increased specificity of transcription, a decreased affinity for nucleic acids, and an increased efficiency of RNA synthesis because of enhanced recycling. This chain is Probable DNA-directed RNA polymerase subunit delta, found in Staphylococcus carnosus (strain TM300).